The following is a 155-amino-acid chain: Small ribosomal subunit protein uS7 (155 aa).

Belongs to the universal ribosomal protein uS7 family. In terms of assembly, part of the 30S ribosomal subunit. Contacts proteins S9 and S11.

Functionally, one of the primary rRNA binding proteins, it binds directly to 16S rRNA where it nucleates assembly of the head domain of the 30S subunit. Is located at the subunit interface close to the decoding center, probably blocks exit of the E-site tRNA. The polypeptide is Small ribosomal subunit protein uS7 (Ureaplasma parvum serovar 3 (strain ATCC 27815 / 27 / NCTC 11736)).